A 906-amino-acid polypeptide reads, in one-letter code: Protein translocase subunit SecA (906 aa).

Residues Gln-87, 105 to 109 (GEGKT), and Asp-513 each bind ATP. Residues 860-906 (QVNKGEVVSDENTGDDTFVRNEKKVGRNEPCPCGSGKKYKQCHGKLD) form a disordered region. Positions 876 to 886 (TFVRNEKKVGR) are enriched in basic and acidic residues. 4 residues coordinate Zn(2+): Cys-890, Cys-892, Cys-901, and His-902. Residues 896 to 906 (KKYKQCHGKLD) show a composition bias toward basic residues.

This sequence belongs to the SecA family. Monomer and homodimer. Part of the essential Sec protein translocation apparatus which comprises SecA, SecYEG and auxiliary proteins SecDF-YajC and YidC. The cofactor is Zn(2+).

The protein resides in the cell inner membrane. Its subcellular location is the cytoplasm. It carries out the reaction ATP + H2O + cellular proteinSide 1 = ADP + phosphate + cellular proteinSide 2.. Functionally, part of the Sec protein translocase complex. Interacts with the SecYEG preprotein conducting channel. Has a central role in coupling the hydrolysis of ATP to the transfer of proteins into and across the cell membrane, serving both as a receptor for the preprotein-SecB complex and as an ATP-driven molecular motor driving the stepwise translocation of polypeptide chains across the membrane. The polypeptide is Protein translocase subunit SecA (Psychromonas ingrahamii (strain DSM 17664 / CCUG 51855 / 37)).